Here is a 31-residue protein sequence, read N- to C-terminus: Photosystem II reaction center protein T (31 aa).

A helical membrane pass occupies residues A3–F23.

The protein belongs to the PsbT family. PSII is composed of 1 copy each of membrane proteins PsbA, PsbB, PsbC, PsbD, PsbE, PsbF, PsbH, PsbI, PsbJ, PsbK, PsbL, PsbM, PsbT, PsbY, PsbZ, Psb30/Ycf12, at least 3 peripheral proteins of the oxygen-evolving complex and a large number of cofactors. It forms dimeric complexes.

The protein localises to the plastid. Its subcellular location is the chloroplast thylakoid membrane. Found at the monomer-monomer interface of the photosystem II (PS II) dimer, plays a role in assembly and dimerization of PSII. PSII is a light-driven water plastoquinone oxidoreductase, using light energy to abstract electrons from H(2)O, generating a proton gradient subsequently used for ATP formation. The sequence is that of Photosystem II reaction center protein T from Ostreococcus tauri.